The sequence spans 88 residues: Cell division topological specificity factor (88 aa).

It belongs to the MinE family.

In terms of biological role, prevents the cell division inhibition by proteins MinC and MinD at internal division sites while permitting inhibition at polar sites. This ensures cell division at the proper site by restricting the formation of a division septum at the midpoint of the long axis of the cell. The sequence is that of Cell division topological specificity factor from Acidovorax ebreus (strain TPSY) (Diaphorobacter sp. (strain TPSY)).